A 191-amino-acid polypeptide reads, in one-letter code: Ribonuclease HII (191 aa).

An RNase H type-2 domain is found at 16–191 (INLIGIDEAG…KLHRKSFKLL (176 aa)). Aspartate 22, glutamate 23, and aspartate 110 together coordinate a divalent metal cation.

It belongs to the RNase HII family. Mn(2+) serves as cofactor. The cofactor is Mg(2+).

It is found in the cytoplasm. It catalyses the reaction Endonucleolytic cleavage to 5'-phosphomonoester.. Functionally, endonuclease that specifically degrades the RNA of RNA-DNA hybrids. The sequence is that of Ribonuclease HII from Campylobacter jejuni subsp. jejuni serotype O:6 (strain 81116 / NCTC 11828).